Here is a 413-residue protein sequence, read N- to C-terminus: Serine hydroxymethyltransferase (413 aa).

(6S)-5,6,7,8-tetrahydrofolate-binding positions include L119 and 123 to 125 (GHL). K228 is modified (N6-(pyridoxal phosphate)lysine).

The protein belongs to the SHMT family. In terms of assembly, homodimer. Pyridoxal 5'-phosphate serves as cofactor.

Its subcellular location is the cytoplasm. It carries out the reaction (6R)-5,10-methylene-5,6,7,8-tetrahydrofolate + glycine + H2O = (6S)-5,6,7,8-tetrahydrofolate + L-serine. Its pathway is one-carbon metabolism; tetrahydrofolate interconversion. The protein operates within amino-acid biosynthesis; glycine biosynthesis; glycine from L-serine: step 1/1. Functionally, catalyzes the reversible interconversion of serine and glycine with tetrahydrofolate (THF) serving as the one-carbon carrier. This reaction serves as the major source of one-carbon groups required for the biosynthesis of purines, thymidylate, methionine, and other important biomolecules. Also exhibits THF-independent aldolase activity toward beta-hydroxyamino acids, producing glycine and aldehydes, via a retro-aldol mechanism. This Caldanaerobacter subterraneus subsp. tengcongensis (strain DSM 15242 / JCM 11007 / NBRC 100824 / MB4) (Thermoanaerobacter tengcongensis) protein is Serine hydroxymethyltransferase.